The chain runs to 393 residues: Fructose-bisphosphate aldolase 4, cytosolic (393 aa).

Residue arginine 73 participates in substrate binding. An S-glutathionyl cysteine; transient; alternate modification is found at cysteine 207. Cysteine 207 is modified (S-nitrosocysteine; transient; alternate). The active-site Proton acceptor is the glutamate 217. Lysine 259 functions as the Schiff-base intermediate with dihydroxyacetone-P in the catalytic mechanism. Residues 301–303 (SGG) and arginine 333 contribute to the substrate site.

This sequence belongs to the class I fructose-bisphosphate aldolase family. As to quaternary structure, homotetramer. In terms of processing, S-glutathionylated at Cys-207. S-nitrosylated at Cys-207. In terms of tissue distribution, highly expressed in flowers.

Its subcellular location is the cytoplasm. It is found in the cytosol. The enzyme catalyses beta-D-fructose 1,6-bisphosphate = D-glyceraldehyde 3-phosphate + dihydroxyacetone phosphate. It participates in carbohydrate degradation; glycolysis; D-glyceraldehyde 3-phosphate and glycerone phosphate from D-glucose: step 4/4. In terms of biological role, fructose-bisphosphate aldolase that plays a key role in glycolysis and gluconeogenesis. The protein is Fructose-bisphosphate aldolase 4, cytosolic of Arabidopsis thaliana (Mouse-ear cress).